The chain runs to 434 residues: UDP-glucuronate 4-epimerase 2 (434 aa).

2 consecutive transmembrane segments (helical) span residues 32–52 and 91–111; these read SVAKLAFWSLVFFGLLFIFFY and GVSVLVTGAAGFVGTHVSAAL. 93–124 lines the NAD(+) pocket; the sequence is SVLVTGAAGFVGTHVSAALKRRGDGVLGLDNF. Tyr243 serves as the catalytic Proton acceptor.

Belongs to the NAD(P)-dependent epimerase/dehydratase family. As to quaternary structure, homodimer. In roots, leaves, siliques, flowers, pollen and stems.

It is found in the golgi apparatus. The protein resides in the golgi stack membrane. The enzyme catalyses UDP-alpha-D-glucuronate = UDP-alpha-D-galacturonate. Involved in the synthesis of the negatively charged monosaccharide that forms the backbone of pectic cell wall components. The sequence is that of UDP-glucuronate 4-epimerase 2 (GAE2) from Arabidopsis thaliana (Mouse-ear cress).